A 546-amino-acid chain; its full sequence is NAD(P)H-quinone oxidoreductase chain 4 (546 aa).

The next 14 helical transmembrane spans lie at 17–37 (VPWLSLSILVPIVGALLVPFI), 48–68 (WYALGVTLITFLITVSAYLNG), 103–123 (LILLTSFITSLACLAAWPVSF), 127–147 (LFYFLLLAMDGGQIAVFAVQD), 149–169 (LLFFLAWELELIPVYLLLAIW), 181–201 (FILYTAGSSLFILLAALAMGF), 222–242 (GFQLLCYAGLLIAFGVKLPIV), 256–276 (TAPVHMLLAGILLKMGGYALL), 290–310 (FAPLLIVLGVVNIIYAALTSF), 327–347 (MGFVLIGVGSFSALGTSGAML), 348–368 (QMISHGLIGASLFFLVGATYD), 389–409 (FALWTVCALASLALPGMSGFV), 430–450 (VVICCLAAVGVILTPIYLLSM), and 477–497 (VYIIGCLLVPIIGIGLYPRLM).

The protein belongs to the complex I subunit 4 family.

The protein resides in the cellular thylakoid membrane. It carries out the reaction a plastoquinone + NADH + (n+1) H(+)(in) = a plastoquinol + NAD(+) + n H(+)(out). The enzyme catalyses a plastoquinone + NADPH + (n+1) H(+)(in) = a plastoquinol + NADP(+) + n H(+)(out). In terms of biological role, NDH-1 shuttles electrons from NAD(P)H, via FMN and iron-sulfur (Fe-S) centers, to quinones in the respiratory chain. The immediate electron acceptor for the enzyme in this species is believed to be plastoquinone. Couples the redox reaction to proton translocation (for every two electrons transferred, four hydrogen ions are translocated across the cytoplasmic membrane), and thus conserves the redox energy in a proton gradient. The protein is NAD(P)H-quinone oxidoreductase chain 4 of Parasynechococcus marenigrum (strain WH8102).